Consider the following 527-residue polypeptide: MAQTLQMEIPNFGNSILECLNEQRLQGLYCDVSVVVKGHAFKAHRAVLAASSSYFRDLFNNSRSAVVELPAAVQPQSFQQILSFCYTGRLSMNVGDQFLLMYTAGFLQIQEIMEKGTEFFLKVSSPSCDSQGLHAEEAPSSEPQSPVAQTSGWPACSTPLPLVSRVKTEQQESDSVQCMPVAKRLWDSGQKEAGGGGNGSRKMAKFSTPDLAANRPHQPPPPQQAPVVAAAQPAVAAGAGQPAGGVAAAGGVVSGPSTSERTSPGTSSAYTSDSPGSYHNEEDEEEDGGEEGMDEQYRQICNMYTMYSMMNVGQTAEKVEALPEQVAPESRNRIRVRQDLASLPAELINQIGNRCHPKLYDEGDPSEKLELVTGTNVYITRAQLMNCHVSAGTRHKVLLRRLLASFFDRNTLANSCGTGIRSSTNDPRRKPLDSRVLHAVKYYCQNFAPNFKESEMNAIAADMCTNARRVVRKSWMPKVKVLKAEDDAYTTFISETGKIEPDMMGVEHGFETASHEGEAGPSAEALQ.

A BTB domain is found at 30-94; it reads CDVSVVVKGH…CYTGRLSMNV (65 aa). Positions 131-153 are disordered; that stretch reads QGLHAEEAPSSEPQSPVAQTSGW. Residues 141 to 152 show a composition bias toward polar residues; that stretch reads SEPQSPVAQTSG. Lys167 participates in a covalent cross-link: Glycyl lysine isopeptide (Lys-Gly) (interchain with G-Cter in SUMO1); alternate. A Glycyl lysine isopeptide (Lys-Gly) (interchain with G-Cter in SUMO2); alternate cross-link involves residue Lys167. Lys183 is covalently cross-linked (Glycyl lysine isopeptide (Lys-Gly) (interchain with G-Cter in SUMO2)). At Ser188 the chain carries Phosphoserine. The tract at residues 210-292 is disordered; sequence DLAANRPHQP…DEEEDGGEEG (83 aa). Residues 225–251 show a composition bias toward low complexity; the sequence is APVVAAAQPAVAAGAGQPAGGVAAAGG. The segment covering 255–277 has biased composition (polar residues); that stretch reads GPSTSERTSPGTSSAYTSDSPGS. Ser259 carries the phosphoserine; by PKC modification. Residues 281-292 are compositionally biased toward acidic residues; it reads EEDEEEDGGEEG. Glycyl lysine isopeptide (Lys-Gly) (interchain with G-Cter in SUMO2) cross-links involve residues Lys318, Lys452, Lys480, Lys483, and Lys498. Residues 374-471 enclose the BEN domain; that stretch reads GTNVYITRAQ…DMCTNARRVV (98 aa).

As to quaternary structure, homooligomer; mediated by the BTB domain. Interacts with HDAC3 and HDAC4. Interacts (via BTB domain) with CUL3, PSMD7 and RCOR1. Overexpressed in several types of carcinomas including ovarian serous carcinomas. Expression levels positively correlate with tumor recurrence in ovarian serous carcinomas, and intense immunoreactivity in primary ovarian tumors predicts early recurrence. Up-regulated in ovarian carcinomas after chemotherapy, suggesting a role in development of chemotherapy resistance in ovarian cancer.

Its subcellular location is the nucleus. It is found in the cytoplasm. Functions as a transcriptional repressor. Seems to function as a transcriptional corepressor in neuronal cells through recruitment of HDAC3 and HDAC4. Contributes to tumor progression, and tumor cell proliferation and survival. This may be mediated at least in part through repressing transcriptional activity of GADD45GIP1. Required for recruiting the proteasome from the nucleus to the cytoplasm and dendritic spines. This chain is Nucleus accumbens-associated protein 1 (NACC1), found in Homo sapiens (Human).